The following is a 3658-amino-acid chain: E3 ubiquitin-protein ligase UPL2 (3658 aa).

A compositionally biased stretch (basic and acidic residues) spans 884 to 893; the sequence is DEKKSVDRAS. Residues 884-914 form a disordered region; that stretch reads DEKKSVDRASDNSVSASSSTAERESDEDSSN. Residues 894–903 show a composition bias toward low complexity; it reads DNSVSASSST. Residues 1271-1312 form the UBA domain; that stretch reads QPDEAIVGMIVEMGFSRSRAEDALRRVGTNSVEMAMDWLFTN. One can recognise a UIM domain in the interval 1318-1337; sequence QEDDELAQALALSLGNSSET. Disordered stretches follow at residues 1331 to 1360, 1702 to 1733, 2004 to 2038, 2052 to 2072, 2113 to 2204, 2293 to 2313, 2417 to 2487, 2503 to 2591, and 2958 to 2987; these read LGNS…KEPP, VSGS…SKSH, AEQL…VDEL, VDNG…RGSS, HVED…DDMV, PLFS…SAGS, ERET…EGGG, SAQG…PEVN, and SPSS…AESE. Basic and acidic residues predominate over residues 1338-1347; the sequence is PKLEDTEKPV. A compositionally biased stretch (basic and acidic residues) spans 2007–2027; sequence LKSEVPNEQKNTDSDERHDSH. Positions 2028 to 2038 are enriched in polar residues; that stretch reads GTSTSTEVDEL. Acidic residues-rich tracts occupy residues 2117 to 2144 and 2156 to 2204; these read RADD…DSVE and DVED…DDMV. Polar residues predominate over residues 2297–2313; sequence RPSQTGNTASVSASAGS. Over residues 2422 to 2431 the composition is skewed to low complexity; the sequence is TTEVQEQQQP. Positions 2503-2518 are enriched in polar residues; sequence SAQGQSDTSGIQNVSV. Serine 2582 is modified (phosphoserine). Residues 3317–3658 form the HECT domain; it reads SPQDLKGRLN…HEANEGFGFA (342 aa). Cysteine 3625 serves as the catalytic Glycyl thioester intermediate.

Belongs to the UPL family. TOM1/PTR1 subfamily. In terms of tissue distribution, widely expressed. Expressed in root, stem, cauline and rosette leaf, seedling and flower (at protein level).

The enzyme catalyses S-ubiquitinyl-[E2 ubiquitin-conjugating enzyme]-L-cysteine + [acceptor protein]-L-lysine = [E2 ubiquitin-conjugating enzyme]-L-cysteine + N(6)-ubiquitinyl-[acceptor protein]-L-lysine.. The protein operates within protein modification; protein ubiquitination. In terms of biological role, probable E3 ubiquitin-protein ligase which mediates ubiquitination and subsequent proteasomal degradation of target proteins. The polypeptide is E3 ubiquitin-protein ligase UPL2 (UPL2) (Arabidopsis thaliana (Mouse-ear cress)).